The following is a 245-amino-acid chain: Probable phosphatase KPN78578_10290 (245 aa).

Residues His7, His9, His15, His40, Glu73, His101, His131, Asp192, and His194 each contribute to the Zn(2+) site.

This sequence belongs to the PHP family. As to quaternary structure, homotrimer. Zn(2+) is required as a cofactor.

This is Probable phosphatase KPN78578_10290 from Klebsiella pneumoniae subsp. pneumoniae (strain ATCC 700721 / MGH 78578).